The primary structure comprises 91 residues: UPF0386 protein Caul_4643 (91 aa).

The protein belongs to the UPF0386 family.

In Caulobacter sp. (strain K31), this protein is UPF0386 protein Caul_4643.